The sequence spans 136 residues: DNA-binding protein H-NS (136 aa).

A coiled-coil region spans residues 13–67; the sequence is TLRAQARECTLETLEEMLEKLEVVVNERREEDSQAQAEIEERTRKLQQYREMLIA. The DNA-binding element occupies 113-118; it reads QGRTPA.

This sequence belongs to the histone-like protein H-NS family. Interacts with YmoA in the absence of DNA. Homodimer that oligomerizes on DNA into higher-order complexes that form bridges between disparate regions of DNA compacting it. Interacts with YmoA.

It localises to the cytoplasm. The protein resides in the nucleoid. A DNA-binding protein implicated in transcriptional repression and chromosome organization and compaction. Binds nucleation sites in AT-rich DNA and bridges them, forming higher-order nucleoprotein complexes and condensing the chromosome. As many horizontally transferred genes are AT-rich, it plays a central role in silencing foreign genes. A subset of genes are repressed by H-NS in association with YmoA. Complements a number of hns deficiencies in E.coli; represses the bgl operon, represses hemolysin expression. In Yersinia enterocolitica, this protein is DNA-binding protein H-NS.